Reading from the N-terminus, the 783-residue chain is BMP/retinoic acid-inducible neural-specific protein 2 (783 aa).

The first 33 residues, M1–A33, serve as a signal peptide directing secretion. In terms of domain architecture, MACPF spans R85–T281. N-linked (GlcNAc...) asparagine glycosylation is found at N185, N354, N473, N579, N626, and N658.

Belongs to the BRINP family.

It localises to the secreted. Inhibits neuronal cell proliferation by negative regulation of the cell cycle transition. The sequence is that of BMP/retinoic acid-inducible neural-specific protein 2 (BRINP2) from Homo sapiens (Human).